A 142-amino-acid polypeptide reads, in one-letter code: Transcriptional regulator MraZ (142 aa).

2 consecutive SpoVT-AbrB domains span residues 5-51 (ASSL…PRPE) and 77-120 (AMDV…DKAS).

The protein belongs to the MraZ family. As to quaternary structure, forms oligomers.

Its subcellular location is the cytoplasm. The protein resides in the nucleoid. This Verminephrobacter eiseniae (strain EF01-2) protein is Transcriptional regulator MraZ.